The sequence spans 572 residues: MRTSQYLLATQKETPADAEVISHQLMLRAGMIRKLASGLYTWLPSGLRVLNKVANIVREEMNKAGAIEVLMPVVQPADLWEESGRWEEYGPELLRVKDRHQRDFVLGPTHEEVITALVRNEISSYKQLPLNLYQVQTKFRDEVRPRFGIMRGREFTMKDAYSFHLEDSCLEETYQKMYDAYCAIFSRMGLDFRAVIADSGSIGGNHSHEFHVLAESGEDAIAFSSDSDYAANVEMAAAVAPEKAVPSGADVETKDAKGKDFNAILKSVDANATNAVKVVLVKGANELNDKGEDVVCDKWVALVLRADHELNDIKAEKIDGVAIPLVEASFEQAKDVLGVSPFFADATNLPVPAYVDASAAALADFTTGAGAGGKVNVNVNWPDGINTVDIRNVVAGDASPDGQGTLDIKRGIEVGHIFQLGRKYSEAMNCGVLSETGKHQTLTMGCYGIGVSRIVAAAIEQNHDKFGIKWPDPIAPFKIALIPMNMHKSHRIKEAAEALYEELVALGIEVLFDDRKERPGVMFNDMELIGIPHSIVIGERNLDNQQVEYKNRRTGEKQLLDLSAAKEFVAAL.

Belongs to the class-II aminoacyl-tRNA synthetase family. ProS type 1 subfamily. Homodimer.

It is found in the cytoplasm. The enzyme catalyses tRNA(Pro) + L-proline + ATP = L-prolyl-tRNA(Pro) + AMP + diphosphate. In terms of biological role, catalyzes the attachment of proline to tRNA(Pro) in a two-step reaction: proline is first activated by ATP to form Pro-AMP and then transferred to the acceptor end of tRNA(Pro). As ProRS can inadvertently accommodate and process non-cognate amino acids such as alanine and cysteine, to avoid such errors it has two additional distinct editing activities against alanine. One activity is designated as 'pretransfer' editing and involves the tRNA(Pro)-independent hydrolysis of activated Ala-AMP. The other activity is designated 'posttransfer' editing and involves deacylation of mischarged Ala-tRNA(Pro). The misacylated Cys-tRNA(Pro) is not edited by ProRS. The sequence is that of Proline--tRNA ligase from Alteromonas mediterranea (strain DSM 17117 / CIP 110805 / LMG 28347 / Deep ecotype).